Here is a 207-residue protein sequence, read N- to C-terminus: MDLNIKSLAGQEAGSLGVAEGVFAADYNEALIHQVVVAYMAGARQGTKAQKTRSEVSGGGAKPWRQKGTGRARAGTIRSPIFRKGGVTFAAKPKSYKQKVNRKMYSGAVKSILSELLRSGRMTIVEELKLETPKTREFKSVIDSLGVKDVLFVVGVEEFSENLYLSSRNLKNVAVCDSVEINPVSLVCFENVVLTKKAIKEIEEKLV.

The segment at 48 to 70 (KAQKTRSEVSGGGAKPWRQKGTG) is disordered.

The protein belongs to the universal ribosomal protein uL4 family. In terms of assembly, part of the 50S ribosomal subunit.

One of the primary rRNA binding proteins, this protein initially binds near the 5'-end of the 23S rRNA. It is important during the early stages of 50S assembly. It makes multiple contacts with different domains of the 23S rRNA in the assembled 50S subunit and ribosome. Functionally, forms part of the polypeptide exit tunnel. The protein is Large ribosomal subunit protein uL4 of Francisella tularensis subsp. holarctica (strain FTNF002-00 / FTA).